The chain runs to 218 residues: NADH-ubiquinone oxidoreductase 21 kDa subunit, mitochondrial (218 aa).

A mitochondrion-targeting transit peptide spans 1–33 (MSALRITTASAARMLRTSNAMMPSVMGAAQRRA). The segment at 31 to 74 (RRALSDSAEPARVPSVESARVPEKLAKEDSPLATPKRNSPDYNV) is disordered. Residues 50-60 (RVPEKLAKEDS) show a composition bias toward basic and acidic residues.

Belongs to the complex I NDUFS4 subunit family. Complex I is composed of about 40 different subunits. This is a component of the iron-sulfur (IP) fragment of the enzyme.

Its subcellular location is the mitochondrion inner membrane. In terms of biological role, accessory subunit of the mitochondrial membrane respiratory chain NADH dehydrogenase (Complex I), that is believed not to be involved in catalysis. Complex I functions in the transfer of electrons from NADH to the respiratory chain. The immediate electron acceptor for the enzyme is believed to be ubiquinone. The chain is NADH-ubiquinone oxidoreductase 21 kDa subunit, mitochondrial (nuo-21) from Neurospora crassa (strain ATCC 24698 / 74-OR23-1A / CBS 708.71 / DSM 1257 / FGSC 987).